The following is a 177-amino-acid chain: Bifunctional protein PyrR (177 aa).

The PRPP-binding signature appears at 98 to 110; the sequence is IILVDDVIYTGRT.

Belongs to the purine/pyrimidine phosphoribosyltransferase family. PyrR subfamily. In terms of assembly, homodimer and homohexamer; in equilibrium.

The enzyme catalyses UMP + diphosphate = 5-phospho-alpha-D-ribose 1-diphosphate + uracil. Regulates transcriptional attenuation of the pyrimidine nucleotide (pyr) operon by binding in a uridine-dependent manner to specific sites on pyr mRNA. This disrupts an antiterminator hairpin in the RNA and favors formation of a downstream transcription terminator, leading to a reduced expression of downstream genes. Functionally, also displays a weak uracil phosphoribosyltransferase activity which is not physiologically significant. The polypeptide is Bifunctional protein PyrR (Clostridium kluyveri (strain ATCC 8527 / DSM 555 / NBRC 12016 / NCIMB 10680 / K1)).